Reading from the N-terminus, the 180-residue chain is uncharacterized protein (180 aa).

An HTH dtxR-type domain is found at 17–80; it reads RRSRILHYLM…LIPNMGVRLT (64 aa).

It belongs to the DtxR/MntR family.

This is an uncharacterized protein from Aeropyrum pernix (strain ATCC 700893 / DSM 11879 / JCM 9820 / NBRC 100138 / K1).